A 479-amino-acid chain; its full sequence is MNTILAQQIANEGGVEAWMIAQQHKSLLRFLTCGSVDDGKSTLIGRLLHDTLQIYEDQLSSLHNDSKRHGTQGEKLDLALLVDGLQAEREQGITIDVAYRYFSTEKRKFIIADTPGHEQYTRNMATGASTCDLAILLIDARKGVLDQTRRHSFISTLLGVKHLVVAINKMDLVDYCEETFARIREDYLTFAEQLPGDLDIRFVPLSALEGDNVAAQSANMRWYSGPTLLEVLETVDIQRAVDRQPMRFPVQYVNRPNLDFRGYAGTLASGSVKVGERIKVLPSGVESSVARIVTFDGDKEEACAGEAITLVLNDDIDISRGDLLLAANETLAPARHAAIDVVWMAEQPLAPGQSYDVKLAGKKTRARIEAIRYQIDINNLTQRDVESLPLNGIGLVEMTFDEPLALDIYQQNPVTGGLIFIDRLSNVTVGAGMVRELDERGATPPVEYSAFELELNALVRRHFPHWDARDLLGDKHGAA.

A tr-type G domain is found at 25–239 (KSLLRFLTCG…EVLETVDIQR (215 aa)). The tract at residues 34–41 (GSVDDGKS) is G1. 34-41 (GSVDDGKS) provides a ligand contact to GTP. The tract at residues 92–96 (GITID) is G2. Positions 113-116 (DTPG) are G3. Residues 113–117 (DTPGH) and 168–171 (NKMD) contribute to the GTP site. The interval 168–171 (NKMD) is G4. The tract at residues 206–208 (SAL) is G5.

The protein belongs to the TRAFAC class translation factor GTPase superfamily. Classic translation factor GTPase family. CysN/NodQ subfamily. Heterodimer composed of CysD, the smaller subunit, and CysN.

It catalyses the reaction sulfate + ATP + H(+) = adenosine 5'-phosphosulfate + diphosphate. The protein operates within sulfur metabolism; hydrogen sulfide biosynthesis; sulfite from sulfate: step 1/3. In terms of biological role, with CysD forms the ATP sulfurylase (ATPS) that catalyzes the adenylation of sulfate producing adenosine 5'-phosphosulfate (APS) and diphosphate, the first enzymatic step in sulfur assimilation pathway. APS synthesis involves the formation of a high-energy phosphoric-sulfuric acid anhydride bond driven by GTP hydrolysis by CysN coupled to ATP hydrolysis by CysD. In Salmonella gallinarum (strain 287/91 / NCTC 13346), this protein is Sulfate adenylyltransferase subunit 1.